The chain runs to 203 residues: Small ribosomal subunit protein uS4 (203 aa).

The S4 RNA-binding domain maps to 93–156 (RRLDNVVYRL…AKVPAILEAV (64 aa)).

Belongs to the universal ribosomal protein uS4 family. Part of the 30S ribosomal subunit. Contacts protein S5. The interaction surface between S4 and S5 is involved in control of translational fidelity.

Functionally, one of the primary rRNA binding proteins, it binds directly to 16S rRNA where it nucleates assembly of the body of the 30S subunit. In terms of biological role, with S5 and S12 plays an important role in translational accuracy. In Streptococcus mutans serotype c (strain ATCC 700610 / UA159), this protein is Small ribosomal subunit protein uS4.